A 611-amino-acid chain; its full sequence is Histone acetyltransferase KAT7 (611 aa).

Positions 1 to 173 are disordered; it reads MPRRKRNAGS…SDLSHRPKRR (173 aa). S10 bears the Phosphoserine mark. Over residues 42–57 the composition is skewed to low complexity; sequence VTRSSARLSQSSQDSS. Residues S50 and S53 each carry the phosphoserine; by ATR modification. Phosphoserine; by PLK1 is present on S57. S64 is modified (phosphoserine). Residues T85 and T88 each carry the phosphothreonine; by CDK1 modification. Polar residues predominate over residues 96–105; the sequence is QTRSSGSETE. Position 102 is a phosphoserine (S102). A Phosphothreonine modification is found at T104. The span at 110 to 125 shows a compositional bias: basic and acidic residues; the sequence is FSDRETKNTADHDESP. A phosphoserine mark is found at S111 and S124. T128 is subject to Phosphothreonine. Residues 134 to 145 are compositionally biased toward low complexity; that stretch reads PSSESDIDISSP. Over residues 148-168 the composition is skewed to basic and acidic residues; the sequence is SHDESIAKDMSLKDSGSDLSH. Phosphoserine is present on residues S158, S162, S164, and S178. A CCHHC-type zinc finger spans residues 176-219; it reads HESYNFNMKCPTPGCNSLGHLTGKHERHFSISGCPLYHNLSADE. Residues K199 and K277 each carry the N6-acetyllysine modification. A Glycyl lysine isopeptide (Lys-Gly) (interchain with G-Cter in SUMO2) cross-link involves residue K323. Positions 332–607 constitute an MYST-type HAT domain; sequence EGSNMIKTIA…MDPSCLKWTP (276 aa). Residue K338 forms a Glycyl lysine isopeptide (Lys-Gly) (interchain with G-Cter in ubiquitin) linkage. Residues 365–390 form a C2HC MYST-type zinc finger; that stretch reads LYMCEFCLKYMKSQTILRRHMAKCVW. Positions 368, 371, 384, and 388 each coordinate Zn(2+). K432 is modified (N6-acetyllysine; by autocatalysis). Residues 475-477 and 483-488 contribute to the acetyl-CoA site; these read ILT and RQGYGK. S506 carries the post-translational modification Phosphoserine. The active-site Proton donor/acceptor is E508. Residues S512 and S521 each contribute to the acetyl-CoA site.

Belongs to the MYST (SAS/MOZ) family. In terms of assembly, component of the HBO1 complex composed of KAT7/HBO1, MEAF6, ING4 or ING5, and one scaffold subunit: complexes containing BRPF scaffold (BRPF1, BRD1/BRPF2 or BRPF3) direct KAT7/HBO1 specificity towards H3K14ac, while complexes containing JADE scaffold (JADE1, JADE2 and JADE3) mediate acetylation of histone H4. Interacts with MCM2 and ORC1. Interacts with the androgen receptor (AR); in the presence of dihydrotestosterone. Interacts with CDT1. Interacts with MAP2K1 and CUL1. Interacts with p53/TP53; leading to inhibit histone acetyltransferase activity. Interacts with MIS18BP1. Phosphorylated at Ser-50 and Ser-53 by ATR in response to DNA damage, promoting its ubiquitination by the CRL4(DDB2) complex and subsequent degradation. Phosphorylation at Ser-50 and Ser-53 by ATR in response to ultraviolet-induced DNA, promotes localization to DNA damage sites. Phosphorylation at Ser-57 by PLK1 during mitosis seems important for prereplicative complex formation and DNA replication licensing, and requires prior phosphorylation at Thr-85 and Thr-88 by CDK1. Phosphorylated by MAP2K1, which accelerates its degradation. In terms of processing, ubiquitinated at Lys-338, leading to proteasomal degradation. Ubiquitinated by the CRL4(DDB2) complex following phosphorylation by ATR, leading to its subsequent degradation. Post-translationally, autoacetylation at Lys-432 is required for proper function. Ubiquitously expressed, with highest levels in testis.

It is found in the nucleus. Its subcellular location is the chromosome. The protein localises to the centromere. It localises to the cytoplasm. The protein resides in the cytosol. The enzyme catalyses L-lysyl-[histone] + acetyl-CoA = N(6)-acetyl-L-lysyl-[histone] + CoA + H(+). Its activity is regulated as follows. Histone acetyltransferase activity is inhibited by GMNN in the context of a complex with CDT1, inhibiting histone H4 acetylation and DNA replication licensing. Selectively inhibited by WM-3835 (N'-(4-fluoro-5-methyl-[1,1'-biphenyl]-3-carbonyl)-3- hydroxybenzenesulfonohydrazide) inhibitor. Catalytic subunit of histone acetyltransferase HBO1 complexes, which specifically mediate acetylation of histone H3 at 'Lys-14' (H3K14ac), thereby regulating various processes, such as gene transcription, protein ubiquitination, immune regulation, stem cell pluripotent and self-renewal maintenance and embryonic development. Some complexes also catalyze acetylation of histone H4 at 'Lys-5', 'Lys-8' and 'Lys-12' (H4K5ac, H4K8ac and H4K12ac, respectively), regulating DNA replication initiation, regulating DNA replication initiation. Specificity of the HBO1 complexes is determined by the scaffold subunit: complexes containing BRPF scaffold (BRPF1, BRD1/BRPF2 or BRPF3) direct KAT7/HBO1 specificity towards H3K14ac, while complexes containing JADE (JADE1, JADE2 and JADE3) scaffold direct KAT7/HBO1 specificity towards histone H4. H3K14ac promotes transcriptional elongation by facilitating the processivity of RNA polymerase II. Acts as a key regulator of hematopoiesis by forming a complex with BRD1/BRPF2, directing KAT7/HBO1 specificity towards H3K14ac and promoting erythroid differentiation. H3K14ac is also required for T-cell development. KAT7/HBO1-mediated acetylation facilitates two consecutive steps, licensing and activation, in DNA replication initiation: H3K14ac facilitates the activation of replication origins, and histone H4 acetylation (H4K5ac, H4K8ac and H4K12ac) facilitates chromatin loading of MCM complexes, promoting DNA replication licensing. Acts as a positive regulator of centromeric CENPA assembly: recruited to centromeres and mediates histone acetylation, thereby preventing centromere inactivation mediated by SUV39H1, possibly by increasing histone turnover/exchange. Involved in nucleotide excision repair: phosphorylation by ATR in response to ultraviolet irradiation promotes its localization to DNA damage sites, where it mediates histone acetylation to facilitate recruitment of XPC at the damaged DNA sites. Acts as an inhibitor of NF-kappa-B independently of its histone acetyltransferase activity. In terms of biological role, plays a central role in the maintenance of leukemia stem cells in acute myeloid leukemia (AML). Acts by mediating acetylation of histone H3 at 'Lys-14' (H3K14ac), thereby facilitating the processivity of RNA polymerase II to maintain the high expression of key genes, such as HOXA9 and HOXA10 that help to sustain the functional properties of leukemia stem cells. The protein is Histone acetyltransferase KAT7 of Homo sapiens (Human).